The chain runs to 270 residues: MPGIETIKSSWADEVELDYGGLPPTTETVENGHKYVTEYKYNKDDKKTKVVRTYKISKQVVPKTVAKRRTWTKFGESKNDKPGPNSQTTMVSEEIIMQFLNSKEDEKANDPLLDPTKNIAKCRICNGEHWSVNCPYKGTAMDTNMMEKKATAAAAAAVDAPKSGKYVPPFLKDSVGKVGMGMRGRDDTAAIRISNLSESMTEADLEELVKKIGPQSKMYLARDKNTGLCKGFAYVHFKQRKDAAAAIEILNGHGYDHLILSVEWSKPQNN.

In terms of domain architecture, RRM spans 189-267 (AAIRISNLSE…LILSVEWSKP (79 aa)).

It belongs to the eIF-3 subunit G family. Component of the eukaryotic translation initiation factor 3 (eIF-3) complex. The eIF-3 complex interacts with pix.

Its subcellular location is the cytoplasm. Its function is as follows. RNA-binding component of the eukaryotic translation initiation factor 3 (eIF-3) complex, which is involved in protein synthesis of a specialized repertoire of mRNAs and, together with other initiation factors, stimulates binding of mRNA and methionyl-tRNAi to the 40S ribosome. The eIF-3 complex specifically targets and initiates translation of a subset of mRNAs involved in cell proliferation. This subunit can bind 18S rRNA. This is Eukaryotic translation initiation factor 3 subunit G-1 from Drosophila ananassae (Fruit fly).